We begin with the raw amino-acid sequence, 217 residues long: Large ribosomal subunit protein uL3 (217 aa).

The protein belongs to the universal ribosomal protein uL3 family. Part of the 50S ribosomal subunit. Forms a cluster with proteins L14 and L19.

One of the primary rRNA binding proteins, it binds directly near the 3'-end of the 23S rRNA, where it nucleates assembly of the 50S subunit. This chain is Large ribosomal subunit protein uL3, found in Mycolicibacterium smegmatis (strain ATCC 700084 / mc(2)155) (Mycobacterium smegmatis).